The primary structure comprises 296 residues: tRNA dimethylallyltransferase (296 aa).

Residue Gly2–Thr9 participates in ATP binding. Substrate is bound at residue Thr4–Thr9. Interaction with substrate tRNA regions lie at residues Asp27–Leu30, Gln151–Arg155, and Arg232–Arg237.

This sequence belongs to the IPP transferase family. In terms of assembly, monomer. Mg(2+) serves as cofactor.

The enzyme catalyses adenosine(37) in tRNA + dimethylallyl diphosphate = N(6)-dimethylallyladenosine(37) in tRNA + diphosphate. Its function is as follows. Catalyzes the transfer of a dimethylallyl group onto the adenine at position 37 in tRNAs that read codons beginning with uridine, leading to the formation of N6-(dimethylallyl)adenosine (i(6)A). This chain is tRNA dimethylallyltransferase, found in Shewanella woodyi (strain ATCC 51908 / MS32).